Reading from the N-terminus, the 596-residue chain is Protein kinase C iota type (596 aa).

Positions 1–12 (MPTQRDSSTMSH) are enriched in polar residues. A disordered region spans residues 1–23 (MPTQRDSSTMSHTVAGGGSGDHS). An N-acetylproline modification is found at Pro2. Residues 2–28 (PTQRDSSTMSHTVAGGGSGDHSHQVRV) form a required for interaction with RAB2 region. Positions 2 to 253 (PTQRDSSTMS…KASSSLGLQD (252 aa)) are regulatory domain. Thr3 is subject to Phosphothreonine. Ser7 and Ser8 each carry phosphoserine. Thr9 is modified (phosphothreonine). Positions 25 to 108 (QVRVKAYYRG…SELLIHVFPC (84 aa)) constitute a PB1 domain. Positions 72–91 (DEEGDPCTVSSQLELEEAFR) are interaction with PARD6A. Positions 125–134 (YRRGARRWRK) match the Pseudosubstrate motif. Residues 140–190 (GHTFQAKRFNRRAHCAICTDRIWGLGRQGYKCINCKLLVHKKCHKLVTIEC) form a Phorbol-ester/DAG-type zinc finger. The segment at 221-246 (PSSHESLDQVGEEKEAMNTRESGKAS) is disordered. The span at 225–243 (ESLDQVGEEKEAMNTRESG) shows a compositional bias: basic and acidic residues. Residues 254–522 (FDLLRVIGRG…FADIQGHPFF (269 aa)) form the Protein kinase domain. ATP is bound at residue 260–268 (IGRGSYAKV). Phosphotyrosine; by SRC occurs at positions 265 and 280. ATP is bound at residue Lys283. At Tyr334 the chain carries Phosphotyrosine; by SRC. The active-site Proton acceptor is Asp378. At Thr412 the chain carries Phosphothreonine; by PDPK1. An AGC-kinase C-terminal domain is found at 523–594 (RNVDWDMMEQ…INPLLMSAEE (72 aa)). Thr564 bears the Phosphothreonine mark.

This sequence belongs to the protein kinase superfamily. AGC Ser/Thr protein kinase family. PKC subfamily. In terms of assembly, forms a complex with SQSTM1 and MP2K5. Interacts directly with SQSTM1. Interacts with IKBKB. Interacts with PARD6A, PARD6B and PARD6G. Part of a quaternary complex containing aPKC, PARD3, a PARD6 protein (PARD6A, PARD6B or PARD6G) and a GTPase protein (CDC42 or RAC1). Part of a complex with LLGL1 and PARD6B. Interacts with ADAP1/CENTA1. Interaction with SMG1, through the ZN-finger domain, activates the kinase activity. Interacts with CDK7. Forms a complex with RAB2A and GAPDH involved in recruitment onto the membrane of vesicular tubular clusters (VTCs). Interacts with ECT2 ('Thr-359' phosphorylated form). Interacts with VAMP2. Interacts with WDFY2 (via WD repeats 1-3). Post-translationally, phosphorylation at Thr-412 in the activation loop is not mandatory for activation. Upon neuronal growth factor (NGF) stimulation, phosphorylated by SRC at Tyr-265, Tyr-280 and Tyr-334. Phosphorylation at Tyr-265 facilitates binding to KPNB1/importin-beta regulating entry of PRKCI into the nucleus. Phosphorylation on Tyr-334 is important for NF-kappa-B stimulation. Phosphorylated at Thr-564 during the initial phase of long term potentiation.

The protein resides in the cytoplasm. It localises to the membrane. It is found in the endosome. Its subcellular location is the nucleus. It catalyses the reaction L-seryl-[protein] + ATP = O-phospho-L-seryl-[protein] + ADP + H(+). The enzyme catalyses L-threonyl-[protein] + ATP = O-phospho-L-threonyl-[protein] + ADP + H(+). With respect to regulation, atypical PKCs (PRKCI and PRKCZ) exhibit an elevated basal enzymatic activity (that may be due to the interaction with SMG1 or SQSTM1) and are not regulated by diacylglycerol, phosphatidylserine, phorbol esters or calcium ions. Two specific sites, Thr-412 (activation loop of the kinase domain) and Thr-564 (turn motif), need to be phosphorylated for its full activation. Might also be a target for novel lipid activators that are elevated during nutrient-stimulated insulin secretion. Calcium- and diacylglycerol-independent serine/ threonine-protein kinase that plays a general protective role against apoptotic stimuli, is involved in NF-kappa-B activation, cell survival, differentiation and polarity, and contributes to the regulation of microtubule dynamics in the early secretory pathway. Is necessary for BCR-ABL oncogene-mediated resistance to apoptotic drug in leukemia cells, protecting leukemia cells against drug-induced apoptosis. In cultured neurons, prevents amyloid beta protein-induced apoptosis by interrupting cell death process at a very early step. In glioblastoma cells, may function downstream of phosphatidylinositol 3-kinase (PI(3)K) and PDPK1 in the promotion of cell survival by phosphorylating and inhibiting the pro-apoptotic factor BAD. Can form a protein complex in non-small cell lung cancer (NSCLC) cells with PARD6A and ECT2 and regulate ECT2 oncogenic activity by phosphorylation, which in turn promotes transformed growth and invasion. In response to nerve growth factor (NGF), acts downstream of SRC to phosphorylate and activate IRAK1, allowing the subsequent activation of NF-kappa-B and neuronal cell survival. Functions in the organization of the apical domain in epithelial cells by phosphorylating EZR. This step is crucial for activation and normal distribution of EZR at the early stages of intestinal epithelial cell differentiation. Forms a protein complex with LLGL1 and PARD6B independently of PARD3 to regulate epithelial cell polarity. Plays a role in microtubule dynamics in the early secretory pathway through interaction with RAB2A and GAPDH and recruitment to vesicular tubular clusters (VTCs). In human coronary artery endothelial cells (HCAEC), is activated by saturated fatty acids and mediates lipid-induced apoptosis. Involved in early synaptic long term potentiation phase in CA1 hippocampal cells and short term memory formation. The polypeptide is Protein kinase C iota type (PRKCI) (Pongo abelii (Sumatran orangutan)).